We begin with the raw amino-acid sequence, 425 residues long: Serine--tRNA ligase (425 aa).

Residues 41-70 (TERSQLQARSNQVGKQVGEKIKSGSDPKGT) form a disordered region. A compositionally biased stretch (polar residues) spans 44–54 (SQLQARSNQVG). The segment covering 57–70 (VGEKIKSGSDPKGT) has biased composition (basic and acidic residues). 234 to 236 (TSE) is an L-serine binding site. 265 to 267 (RRE) serves as a coordination point for ATP. Glutamate 288 serves as a coordination point for L-serine. 352 to 355 (EISS) lines the ATP pocket. Serine 388 lines the L-serine pocket.

It belongs to the class-II aminoacyl-tRNA synthetase family. Type-1 seryl-tRNA synthetase subfamily. Homodimer. The tRNA molecule binds across the dimer.

It is found in the cytoplasm. The catalysed reaction is tRNA(Ser) + L-serine + ATP = L-seryl-tRNA(Ser) + AMP + diphosphate + H(+). It carries out the reaction tRNA(Sec) + L-serine + ATP = L-seryl-tRNA(Sec) + AMP + diphosphate + H(+). It functions in the pathway aminoacyl-tRNA biosynthesis; selenocysteinyl-tRNA(Sec) biosynthesis; L-seryl-tRNA(Sec) from L-serine and tRNA(Sec): step 1/1. Functionally, catalyzes the attachment of serine to tRNA(Ser). Is also able to aminoacylate tRNA(Sec) with serine, to form the misacylated tRNA L-seryl-tRNA(Sec), which will be further converted into selenocysteinyl-tRNA(Sec). The sequence is that of Serine--tRNA ligase from Trichodesmium erythraeum (strain IMS101).